A 275-amino-acid chain; its full sequence is Large ribosomal subunit protein uL2 (275 aa).

Residues 222 to 275 (GKVMNPVDHPHGGGEGRNPIGRNPSTPWGKLAMGVKTRGNKKSDRLIVKRRNKK) form a disordered region.

The protein belongs to the universal ribosomal protein uL2 family. In terms of assembly, part of the 50S ribosomal subunit. Forms a bridge to the 30S subunit in the 70S ribosome.

One of the primary rRNA binding proteins. Required for association of the 30S and 50S subunits to form the 70S ribosome, for tRNA binding and peptide bond formation. It has been suggested to have peptidyltransferase activity; this is somewhat controversial. Makes several contacts with the 16S rRNA in the 70S ribosome. The chain is Large ribosomal subunit protein uL2 from Desulforamulus reducens (strain ATCC BAA-1160 / DSM 100696 / MI-1) (Desulfotomaculum reducens).